The following is a 70-amino-acid chain: Large ribosomal subunit protein bL28 (70 aa).

It belongs to the bacterial ribosomal protein bL28 family.

In Maridesulfovibrio salexigens (strain ATCC 14822 / DSM 2638 / NCIMB 8403 / VKM B-1763) (Desulfovibrio salexigens), this protein is Large ribosomal subunit protein bL28.